The primary structure comprises 705 residues: Elongation factor G (705 aa).

The tr-type G domain occupies 6–282 (NKVRNIGIMA…AVVDFLPSPL (277 aa)). GTP-binding positions include 15–22 (AHIDAGKT), 79–83 (DTPGH), and 133–136 (NKMD).

It belongs to the TRAFAC class translation factor GTPase superfamily. Classic translation factor GTPase family. EF-G/EF-2 subfamily.

The protein localises to the cytoplasm. Its function is as follows. Catalyzes the GTP-dependent ribosomal translocation step during translation elongation. During this step, the ribosome changes from the pre-translocational (PRE) to the post-translocational (POST) state as the newly formed A-site-bound peptidyl-tRNA and P-site-bound deacylated tRNA move to the P and E sites, respectively. Catalyzes the coordinated movement of the two tRNA molecules, the mRNA and conformational changes in the ribosome. The chain is Elongation factor G from Corynebacterium glutamicum (strain ATCC 13032 / DSM 20300 / JCM 1318 / BCRC 11384 / CCUG 27702 / LMG 3730 / NBRC 12168 / NCIMB 10025 / NRRL B-2784 / 534).